Here is a 627-residue protein sequence, read N- to C-terminus: Protein fem-1 homolog B (627 aa).

ANK repeat units lie at residues 45 to 74 (QRST…VQTQ), 87 to 116 (DGAT…NVNH), 120 to 149 (TNST…NISI), 153 to 182 (YDNT…DPNA), 186 to 215 (CGAT…AMMV), and 218 to 248 (HGMT…NRRS). One copy of the TPR repeat lies at 344-377 (SHPIIYRGAVYADNMEFEQCIKLWLHALHLRQKG). ANK repeat units follow at residues 483–527 (DGST…DVNA) and 531–568 (EGNS…HTDM).

This sequence belongs to the fem-1 family. Component of a CRL2 E3 ubiquitin-protein ligase complex, also named ECS (Elongin BC-CUL2/5-SOCS-box protein) complex.

The protein localises to the cytoplasm. It is found in the nucleus. It functions in the pathway protein modification; protein ubiquitination. Its function is as follows. Substrate-recognition component of a Cul2-RING (CRL2) E3 ubiquitin-protein ligase complex of the DesCEND (destruction via C-end degrons) pathway, which recognizes a C-degron located at the extreme C terminus of target proteins, leading to their ubiquitination and degradation. The C-degron recognized by the DesCEND pathway is usually a motif of less than ten residues and can be present in full-length proteins, truncated proteins or proteolytically cleaved forms. The CRL2(FEM1B) complex specifically recognizes proteins ending with -Gly-Leu-Asp-Arg, leading to their ubiquitination and degradation. The sequence is that of Protein fem-1 homolog B from Gallus gallus (Chicken).